A 114-amino-acid chain; its full sequence is Snake venom vascular endothelial growth factor (114 aa).

Q1 is modified (pyrrolidone carboxylic acid). 3 cysteine pairs are disulfide-bonded: C14–C56, C45–C91, and C49–C93. The interval 92 to 114 (ECRPGSTVNNGKRKKNPKEGEPR) is disordered.

This sequence belongs to the PDGF/VEGF growth factor family. Snake venom VEGF subfamily. As to quaternary structure, homodimer; disulfide-linked. Interacts with human VEGF receptor 1/FLT1. Interacts with human VEGF receptor 2/KDR. As to expression, expressed by venom gland.

It is found in the secreted. Its function is as follows. Snake venom vascular endothelial growth factor (svVEGF) that may contribute to venom dispersion and prey subjugation by inducing vascular permeability and hypotension. Induces an increase in capillary permeability after intradermal injection, as well as a drastic hypotensive effect after intravenous injection. The hypotension is mediated by nitric oxide (NO), which is produced by VEGF-activated endothelium NO synthase. Induces angiogenesis and migration of human vascular endothelial cells in vitro. Exhibits angiogenic activity by inducing human umbilical vein endothelial cells (HUVEC) to develop vessels in vitro. Induces cellular migration of HUVEC cells towards a wound in scratch assays, enhancing wound closure after 12 h by 49.5%. Induces dose-dependent leukocyte recruitment to the peritoneal cavity leading to increased vascular permeability in mice. The protein is Snake venom vascular endothelial growth factor of Crotalus durissus terrificus (South American rattlesnake).